Here is a 165-residue protein sequence, read N- to C-terminus: Ubiquitin-fold modifier-conjugating enzyme 1 (165 aa).

Cys-116 serves as the catalytic Glycyl thioester intermediate.

Belongs to the ubiquitin-conjugating enzyme family. UFC1 subfamily.

Its function is as follows. E2-like enzyme which forms an intermediate with UFM1 via a thioester linkage. The polypeptide is Ubiquitin-fold modifier-conjugating enzyme 1 (Drosophila mojavensis (Fruit fly)).